We begin with the raw amino-acid sequence, 250 residues long: 2,3-bisphosphoglycerate-dependent phosphoglycerate mutase (250 aa).

Substrate contacts are provided by residues 8–15 (RHGQSAWN), 21–22 (TG), Arg-60, 87–90 (ERHY), Lys-98, 114–115 (RR), and 183–184 (GN). His-9 (tele-phosphohistidine intermediate) is an active-site residue. Glu-87 functions as the Proton donor/acceptor in the catalytic mechanism.

Belongs to the phosphoglycerate mutase family. BPG-dependent PGAM subfamily. As to quaternary structure, homodimer.

It carries out the reaction (2R)-2-phosphoglycerate = (2R)-3-phosphoglycerate. The protein operates within carbohydrate degradation; glycolysis; pyruvate from D-glyceraldehyde 3-phosphate: step 3/5. Catalyzes the interconversion of 2-phosphoglycerate and 3-phosphoglycerate. The chain is 2,3-bisphosphoglycerate-dependent phosphoglycerate mutase from Nitratidesulfovibrio vulgaris (strain DP4) (Desulfovibrio vulgaris).